We begin with the raw amino-acid sequence, 174 residues long: MTKLIIMMMCLIMSFIFMQMKHPLSMGLMLLIQTFLTCLITGIYVKSFWFSYVLFLIFLGGMLILFIYVTSLSSNEMFTMSFKLTMFSLVLFSLSMVIFFILDKTLIEQFIINMEMEKFSMTNNLINENILSLNKMYNFPTNLITLLLINYLFLTLLVTVKITKKFYGPLRPMN.

The next 4 membrane-spanning stretches (helical) occupy residues 25-45, 48-68, 82-102, and 143-163; these read SMGL…GIYV, FWFS…LFIY, FKLT…FFIL, and LITL…VKIT.

It belongs to the complex I subunit 6 family.

The protein resides in the mitochondrion membrane. The enzyme catalyses a ubiquinone + NADH + 5 H(+)(in) = a ubiquinol + NAD(+) + 4 H(+)(out). Its function is as follows. Core subunit of the mitochondrial membrane respiratory chain NADH dehydrogenase (Complex I) that is believed to belong to the minimal assembly required for catalysis. Complex I functions in the transfer of electrons from NADH to the respiratory chain. The immediate electron acceptor for the enzyme is believed to be ubiquinone. This Anopheles gambiae (African malaria mosquito) protein is NADH-ubiquinone oxidoreductase chain 6 (mt:ND6).